The primary structure comprises 443 residues: Protein translocase subunit SecY (443 aa).

Transmembrane regions (helical) follow at residues 24-44, 77-97, 125-145, 154-174, 183-203, 217-237, 274-294, 317-337, 370-390, and 397-417; these read LFVIGALIVFRIGSFIPIPGI, IFALGIMPYISASIIIQLLTV, LVLAIFQSIGIATGLPNMPGM, FAFYFTAVVSLVTGTMFLMWL, IGNGISIIIFAGIVAGLPPAI, FLVLLLVAVLVFAVTFFVVFV, VIPAIFASSIILFPATIASWF, YVLLYASAIIFFCFFYTALVF, MTRLTLVGALYITFICLIPEF, and VPFYFGGTSLLIVVVVIMDFM.

The protein belongs to the SecY/SEC61-alpha family. In terms of assembly, component of the Sec protein translocase complex. Heterotrimer consisting of SecY, SecE and SecG subunits. The heterotrimers can form oligomers, although 1 heterotrimer is thought to be able to translocate proteins. Interacts with the ribosome. Interacts with SecDF, and other proteins may be involved. Interacts with SecA.

It is found in the cell inner membrane. The central subunit of the protein translocation channel SecYEG. Consists of two halves formed by TMs 1-5 and 6-10. These two domains form a lateral gate at the front which open onto the bilayer between TMs 2 and 7, and are clamped together by SecE at the back. The channel is closed by both a pore ring composed of hydrophobic SecY resides and a short helix (helix 2A) on the extracellular side of the membrane which forms a plug. The plug probably moves laterally to allow the channel to open. The ring and the pore may move independently. The sequence is that of Protein translocase subunit SecY from Escherichia coli O157:H7.